Here is a 351-residue protein sequence, read N- to C-terminus: C(7)-cyclitol 7-kinase (351 aa).

The protein belongs to the ROK (NagC/XylR) family.

The enzyme catalyses valienone + ATP = valienone 7-phosphate + ADP + H(+). It carries out the reaction validone + ATP = validone 7-phosphate + ADP + H(+). Functionally, involved in the biosynthesis of the antifungal agent validamycin A. Catalyzes the phosphorylation of valienone and validone to their 7-phosphate derivatives. The sequence is that of C(7)-cyclitol 7-kinase from Streptomyces hygroscopicus subsp. limoneus.